Consider the following 208-residue polypeptide: 3-demethoxyubiquinol 3-hydroxylase (208 aa).

The Fe cation site is built by Glu-57, Glu-87, His-90, Glu-139, Glu-171, and His-174.

It belongs to the COQ7 family. The cofactor is Fe cation.

It localises to the cell membrane. The catalysed reaction is a 5-methoxy-2-methyl-3-(all-trans-polyprenyl)benzene-1,4-diol + AH2 + O2 = a 3-demethylubiquinol + A + H2O. It participates in cofactor biosynthesis; ubiquinone biosynthesis. In terms of biological role, catalyzes the hydroxylation of 2-nonaprenyl-3-methyl-6-methoxy-1,4-benzoquinol during ubiquinone biosynthesis. This is 3-demethoxyubiquinol 3-hydroxylase from Burkholderia cenocepacia (strain HI2424).